A 303-amino-acid polypeptide reads, in one-letter code: Heme A synthase (303 aa).

Over 1-8 (MFGKKNLK) the chain is Cytoplasmic. A helical transmembrane segment spans residues 9 to 29 (WLGVVATLMMTFVQLGGALVT). At 30 to 67 (KTGSADGCGSSWPLCHGALIPEFFPIDTIIELSHRAVS) the chain is on the extracellular side. Cysteines 37 and 44 form a disulfide. The active site involves E60. H63 contributes to the heme o binding site. The chain crosses the membrane as a helical span at residues 68–88 (ALSLLMVLWLVITAWKHIGYI). Topologically, residues 89-93 (KEIKP) are cytoplasmic. Residues 94 to 114 (LSIISVGFLLLQALIGAAAVI) traverse the membrane as a helical segment. Residues 115-125 (WQQNDYVLALH) lie on the Extracellular side of the membrane. H125 contacts heme o. A helical membrane pass occupies residues 126–146 (FGISLISFSSVFLITLIIFSI). At 147 to 163 (DQKYEAAELYIKKPLRR) the chain is on the cytoplasmic side. A helical transmembrane segment spans residues 164–184 (LTWLMAIIIYCGVYTGALVRH). At 185–215 (ADASLAYGGWPLPFHDLVPHSEQDWVQLTHR) the chain is on the extracellular side. H214 is a heme b binding site. A helical membrane pass occupies residues 216–236 (IMAFIVFTIIMITYIHAVKNY). Over 237 to 244 (PNNRTVHY) the chain is Cytoplasmic. A helical membrane pass occupies residues 245–265 (GYTAAFILVILQVITGALSIM). The Extracellular segment spans residues 266–270 (TNVNL). A helical membrane pass occupies residues 271–291 (IIALFHALFITYLFGMTTYFI). H276 is a binding site for heme b. Over 292–303 (MLMLRSVRSDKQ) the chain is Cytoplasmic.

This sequence belongs to the COX15/CtaA family. Type 1 subfamily. In terms of assembly, interacts with CtaB. Requires heme b as cofactor.

It localises to the cell membrane. The catalysed reaction is Fe(II)-heme o + 2 A + H2O = Fe(II)-heme a + 2 AH2. Its pathway is porphyrin-containing compound metabolism; heme A biosynthesis; heme A from heme O: step 1/1. Its function is as follows. Catalyzes the conversion of heme O to heme A by two successive hydroxylations of the methyl group at C8. The first hydroxylation forms heme I, the second hydroxylation results in an unstable dihydroxymethyl group, which spontaneously dehydrates, resulting in the formyl group of heme A. In Staphylococcus aureus (strain bovine RF122 / ET3-1), this protein is Heme A synthase.